Consider the following 310-residue polypeptide: Olfactory receptor 10G2 (310 aa).

Residues 1 to 29 lie on the Extracellular side of the membrane; that stretch reads MGKTKNTSLDAVVTDFILLGLSHPPNLRS. Asn-6 carries an N-linked (GlcNAc...) asparagine glycan. The chain crosses the membrane as a helical span at residues 30-50; the sequence is LLFLVFFIIYILTQLGNLLIL. The Cytoplasmic segment spans residues 51–58; that stretch reads LTMWADPK. Residues 59-80 form a helical membrane-spanning segment; that stretch reads LCARPMYILLGVLSFLDMWLSS. Residues 81–104 lie on the Extracellular side of the membrane; sequence VTVPLLILDFTPSIKAIPFGGCVA. An intrachain disulfide couples Cys-102 to Cys-194. A helical transmembrane segment spans residues 105-125; the sequence is QLYFFHFLGSTQCFLYTLMAY. Over 126-144 the chain is Cytoplasmic; the sequence is DRYLAICQPLRYPVLMNGR. A helical transmembrane segment spans residues 145–165; the sequence is LCTVLVAGAWVAGSMHGSIQA. Residues 166 to 202 lie on the Extracellular side of the membrane; it reads TLTFRLPYCGPNQVDYFICDIPAVLRLACADTTVNEL. A helical membrane pass occupies residues 203 to 222; it reads VTFVDVGVVAASCFMLILLS. The Cytoplasmic portion of the chain corresponds to 223-242; the sequence is YANIVNAILKIRTTDGRRRA. Residues 243–263 traverse the membrane as a helical segment; the sequence is FSTCGSHLIVVTVYYVPCIFI. Residues 264 to 274 lie on the Extracellular side of the membrane; it reads YLRAGSKDPLD. A helical membrane pass occupies residues 275–295; it reads GAAAVFYTVVTPLLNPLIYTL. Over 296 to 310 the chain is Cytoplasmic; the sequence is RNQEVKSALKRITAG.

Belongs to the G-protein coupled receptor 1 family.

It is found in the cell membrane. Functionally, odorant receptor. The sequence is that of Olfactory receptor 10G2 (OR10G2) from Homo sapiens (Human).